The sequence spans 65 residues: Disintegrin VLO4 (65 aa).

One can recognise a Disintegrin domain in the interval 1-65 (MNSGNPCCDP…PDCPRNPWKG (65 aa)). 4 disulfides stabilise this stretch: C7-C30, C21-C27, C26-C51, and C39-C58. A Cell attachment site motif is present at residues 43 to 45 (RGD).

The protein belongs to the disintegrin family. Dimeric disintegrin subfamily. In terms of assembly, homodimer; disulfide-linked. In terms of tissue distribution, expressed by the venom gland.

It localises to the secreted. Poor inhibitor of platelet aggregation. The disintegrin inhibits the adhesion of cells expressing the RGD-dependent integrin alpha-5/beta-1 (ITGA5/ITGB1) to immobilized fibronectin. Inhibition on alpha-2b/beta-3 (ITGA2B/ITGB3) is low. The sequence is that of Disintegrin VLO4 from Macrovipera lebetina obtusa (Levant blunt-nosed viper).